The sequence spans 206 residues: Pyridoxine/pyridoxamine 5'-phosphate oxidase (206 aa).

Residues Arg-53–Lys-58, Tyr-68–Thr-69, Lys-75, and Gln-97 contribute to the FMN site. Lys-58 contacts substrate. 3 residues coordinate substrate: Tyr-115, Arg-119, and Ser-123. Residues Gln-132–Ser-133 and Trp-177 contribute to the FMN site. Residue Arg-183–His-185 participates in substrate binding. Arg-187 lines the FMN pocket.

It belongs to the pyridoxamine 5'-phosphate oxidase family. Homodimer. Requires FMN as cofactor.

It carries out the reaction pyridoxamine 5'-phosphate + O2 + H2O = pyridoxal 5'-phosphate + H2O2 + NH4(+). It catalyses the reaction pyridoxine 5'-phosphate + O2 = pyridoxal 5'-phosphate + H2O2. The protein operates within cofactor metabolism; pyridoxal 5'-phosphate salvage; pyridoxal 5'-phosphate from pyridoxamine 5'-phosphate: step 1/1. Its pathway is cofactor metabolism; pyridoxal 5'-phosphate salvage; pyridoxal 5'-phosphate from pyridoxine 5'-phosphate: step 1/1. In terms of biological role, catalyzes the oxidation of either pyridoxine 5'-phosphate (PNP) or pyridoxamine 5'-phosphate (PMP) into pyridoxal 5'-phosphate (PLP). This Allorhizobium ampelinum (strain ATCC BAA-846 / DSM 112012 / S4) (Agrobacterium vitis (strain S4)) protein is Pyridoxine/pyridoxamine 5'-phosphate oxidase.